A 573-amino-acid chain; its full sequence is Putative ATP-dependent RNA helicase R563 (573 aa).

The region spanning 57-233 (INPKTPYKGL…ALTMNLLVRN (177 aa)) is the Helicase ATP-binding domain. Residue 70-77 (HRIGAGKT) participates in ATP binding. Positions 179–182 (DEVH) match the DEAH box motif. In terms of domain architecture, Helicase C-terminal spans 374–551 (KILRKIKRCN…AFEKALKEAA (178 aa)).

The protein belongs to the DEAD box helicase family. DEAH subfamily.

Its subcellular location is the virion. The catalysed reaction is ATP + H2O = ADP + phosphate + H(+). This is Putative ATP-dependent RNA helicase R563 from Acanthamoeba polyphaga mimivirus (APMV).